We begin with the raw amino-acid sequence, 124 residues long: MNLFIKIINKYLYKLIYNFIDFYQKIISPILPARCRYYPTCSNYGKQALAWHGVLNGSLLLLKRISRCHPLGGHGVDFVPLPLASYRYQYLSCNPVAHGQFHGFYVYRDNHGYVTRLNHMMKLT.

Belongs to the UPF0161 family.

It localises to the cell inner membrane. Functionally, could be involved in insertion of integral membrane proteins into the membrane. This chain is Putative membrane protein insertion efficiency factor, found in Psychrobacter cryohalolentis (strain ATCC BAA-1226 / DSM 17306 / VKM B-2378 / K5).